Consider the following 103-residue polypeptide: Histone H4 (103 aa).

The tract at residues Met1–Ile32 is disordered. Positions Gly10–Gln25 are enriched in basic residues. Residue Lys16 is modified to N6-acetyl-N6-methyllysine; alternate. Lys16 is subject to N6-methyllysine; alternate. The DNA-binding element occupies Lys20–Lys24. N6-glutaryllysine is present on Lys94.

Belongs to the histone H4 family. As to quaternary structure, the nucleosome is a histone octamer containing two molecules each of H2A, H2B, H3 and H4 assembled in one H3-H4 heterotetramer and two H2A-H2B heterodimers. The octamer wraps approximately 147 bp of DNA. Glutarylation at Lys-94 (H4K91glu) destabilizes nucleosomes by promoting dissociation of the H2A-H2B dimers from nucleosomes.

Its subcellular location is the nucleus. The protein resides in the chromosome. Core component of nucleosome. Nucleosomes wrap and compact DNA into chromatin, limiting DNA accessibility to the cellular machineries which require DNA as a template. Histones thereby play a central role in transcription regulation, DNA repair, DNA replication and chromosomal stability. DNA accessibility is regulated via a complex set of post-translational modifications of histones, also called histone code, and nucleosome remodeling. The protein is Histone H4 (HHF1) of Encephalitozoon cuniculi (strain GB-M1) (Microsporidian parasite).